We begin with the raw amino-acid sequence, 292 residues long: 2-(5''-triphosphoribosyl)-3'-dephosphocoenzyme-A synthase (292 aa).

The protein belongs to the CitG/MdcB family.

It carries out the reaction 3'-dephospho-CoA + ATP = 2'-(5''-triphospho-alpha-D-ribosyl)-3'-dephospho-CoA + adenine. Catalyzes the formation of 2-(5''-triphosphoribosyl)-3'-dephosphocoenzyme-A, the precursor of the prosthetic group of the holo-acyl carrier protein (gamma chain) of citrate lyase, from ATP and dephospho-CoA. This Escherichia coli O17:K52:H18 (strain UMN026 / ExPEC) protein is 2-(5''-triphosphoribosyl)-3'-dephosphocoenzyme-A synthase.